A 529-amino-acid chain; its full sequence is MQQRRPVRRALLSVSDKAGIVEFAQALSARGVELLSTGGTARLLAEKGLPVTEVSDYTGFPEMMDGRVKTLHPKVHGGILGRRGQDDAIMEEHQIQPIDMVVVNLYPFAQTVAREGCSLEDAVENIDIGGPTMVRSAAKNHKDVAIVVKSSDYDAIIKEMDDNEGSLTLATRFDLAIKAFEHTAAYDSMIANYFGSMVPAYHGESKEAAGRFPRTLNLNFIKKQDMRYGENSHQQAAFYIEENVKEASVATATQVQGKALSYNNIADTDAALECVKEFAEPACVIVKHANPCGVAIGNSILDAYDRAYKTDPTSAFGGIIAFNRELDAETAQAIISRQFVEVIIAPSASEEALKITAAKQNVRVLTCGQWGERVPGLDFKRVNGGLLVQDRDLGMVGAEELRVVTQRQPTEQELRDALFCWKVAKFVKSNAIVYAKNNMTIGIGAGQMSRVYSAKIAGIKAADEGLEVKGSSMASDAFFPFRDGIDAAAAAGVTCVIQPGGSIRDDEVIAAADEHGIAMLFTDMRHFRH.

The MGS-like domain maps to 1 to 148; it reads MQQRRPVRRA…KNHKDVAIVV (148 aa). Position 287 is an N6-acetyllysine (Lys-287).

It belongs to the PurH family.

It catalyses the reaction (6R)-10-formyltetrahydrofolate + 5-amino-1-(5-phospho-beta-D-ribosyl)imidazole-4-carboxamide = 5-formamido-1-(5-phospho-D-ribosyl)imidazole-4-carboxamide + (6S)-5,6,7,8-tetrahydrofolate. The enzyme catalyses IMP + H2O = 5-formamido-1-(5-phospho-D-ribosyl)imidazole-4-carboxamide. It participates in purine metabolism; IMP biosynthesis via de novo pathway; 5-formamido-1-(5-phospho-D-ribosyl)imidazole-4-carboxamide from 5-amino-1-(5-phospho-D-ribosyl)imidazole-4-carboxamide (10-formyl THF route): step 1/1. Its pathway is purine metabolism; IMP biosynthesis via de novo pathway; IMP from 5-formamido-1-(5-phospho-D-ribosyl)imidazole-4-carboxamide: step 1/1. The sequence is that of Bifunctional purine biosynthesis protein PurH from Escherichia coli O8 (strain IAI1).